The chain runs to 466 residues: Uronate isomerase (466 aa).

Belongs to the metallo-dependent hydrolases superfamily. Uronate isomerase family.

It carries out the reaction D-glucuronate = D-fructuronate. The enzyme catalyses aldehydo-D-galacturonate = keto-D-tagaturonate. It functions in the pathway carbohydrate metabolism; pentose and glucuronate interconversion. In Brucella suis (strain ATCC 23445 / NCTC 10510), this protein is Uronate isomerase.